The sequence spans 265 residues: Oxygen-evolving enhancer protein 2-2, chloroplastic (265 aa).

Residues 1-79 (MASTQCFLHH…VGSKVSPADA (79 aa)) constitute a chloroplast transit peptide.

This sequence belongs to the PsbP family.

The protein resides in the plastid. The protein localises to the chloroplast thylakoid membrane. In terms of biological role, may be involved in the regulation of photosystem II. The sequence is that of Oxygen-evolving enhancer protein 2-2, chloroplastic (PSBP2) from Nicotiana tabacum (Common tobacco).